We begin with the raw amino-acid sequence, 467 residues long: Acyl-lipid (8-3)-desaturase B (467 aa).

The 78-residue stretch at 12–89 (LKLYTWDEVS…IKQYEIGYIS (78 aa)) folds into the Cytochrome b5 heme-binding domain. Positions 47 and 70 each coordinate heme. Transmembrane regions (helical) follow at residues 123-143 (VSVGVFTRMVLIYLFLFVTYY) and 152-172 (FWLNCIFAVLYGVANSLFGLH). The short motif at 175-179 (HDACH) is the Histidine box-1 element. Residues 187-207 (MTWKILGATFDLFAGASFYAW) traverse the membrane as a helical segment. Positions 211 to 216 (HVIGHH) match the Histidine box-2 motif. The next 2 helical transmembrane spans lie at 293-313 (AIFILGKLVFIISRFILPLIY) and 317-337 (FSHLICFFLISELVLGWYLAI). The Histidine box-3 motif lies at 400 to 404 (QVIHH).

Belongs to the fatty acid desaturase type 1 family. The cofactor is Fe(2+).

Its subcellular location is the membrane. It catalyses the reaction an (8Z,11Z,14Z)-icosatrienoyl-containing glycerolipid + 2 Fe(II)-[cytochrome b5] + O2 + 2 H(+) = (5Z,8Z,11Z,14Z)-eicosatetraenoyl-containing glycerolipid + 2 Fe(III)-[cytochrome b5] + 2 H2O. It carries out the reaction an (8Z,11Z,14Z,17Z)-eicosatetraenoyl-containing glycerolipid + 2 Fe(II)-[cytochrome b5] + O2 + 2 H(+) = a (5Z,8Z,11Z,14Z,17Z)-eicosapentaenoyl-containing glycerolipid + 2 Fe(III)-[cytochrome b5] + 2 H2O. Functionally, fatty acid desaturase that introduces a cis double bond at the 5-position in 18-carbon polyunsaturated fatty acids. This Dictyostelium discoideum (Social amoeba) protein is Acyl-lipid (8-3)-desaturase B (fadB).